Here is a 545-residue protein sequence, read N- to C-terminus: Glucose-6-phosphate isomerase (545 aa).

Glutamate 351 functions as the Proton donor in the catalytic mechanism. Catalysis depends on residues histidine 382 and lysine 510.

The protein belongs to the GPI family.

It localises to the cytoplasm. The enzyme catalyses alpha-D-glucose 6-phosphate = beta-D-fructose 6-phosphate. It participates in carbohydrate biosynthesis; gluconeogenesis. Its pathway is carbohydrate degradation; glycolysis; D-glyceraldehyde 3-phosphate and glycerone phosphate from D-glucose: step 2/4. Its function is as follows. Catalyzes the reversible isomerization of glucose-6-phosphate to fructose-6-phosphate. This chain is Glucose-6-phosphate isomerase, found in Helicobacter pylori (strain G27).